Reading from the N-terminus, the 459-residue chain is Cysteine--tRNA ligase (459 aa).

C28 provides a ligand contact to Zn(2+). The short motif at V30–H40 is the 'HIGH' region element. Residues C209, H234, and E238 each coordinate Zn(2+). The short motif at K266 to S270 is the 'KMSKS' region element. K269 contributes to the ATP binding site.

This sequence belongs to the class-I aminoacyl-tRNA synthetase family. As to quaternary structure, monomer. Requires Zn(2+) as cofactor.

It is found in the cytoplasm. The enzyme catalyses tRNA(Cys) + L-cysteine + ATP = L-cysteinyl-tRNA(Cys) + AMP + diphosphate. This chain is Cysteine--tRNA ligase, found in Actinobacillus pleuropneumoniae serotype 3 (strain JL03).